The sequence spans 446 residues: N-succinylarginine dihydrolase (446 aa).

Residues 19-28 (AGLSFGNVAS), N110, and 137-138 (HR) each bind substrate. E174 is a catalytic residue. R213 is a substrate binding site. H249 is a catalytic residue. Substrate-binding residues include D251 and N364. The active-site Nucleophile is the C370.

Belongs to the succinylarginine dihydrolase family. In terms of assembly, homodimer.

The catalysed reaction is N(2)-succinyl-L-arginine + 2 H2O + 2 H(+) = N(2)-succinyl-L-ornithine + 2 NH4(+) + CO2. Its pathway is amino-acid degradation; L-arginine degradation via AST pathway; L-glutamate and succinate from L-arginine: step 2/5. Its function is as follows. Catalyzes the hydrolysis of N(2)-succinylarginine into N(2)-succinylornithine, ammonia and CO(2). This Burkholderia pseudomallei (strain 668) protein is N-succinylarginine dihydrolase.